The chain runs to 608 residues: Nuclear protein localization protein 4 homolog (608 aa).

N-acetylalanine is present on A2. K179 carries the post-translational modification N6-acetyllysine. In terms of domain architecture, MPN spans 226–363 (IMFENHTVAD…ICRLSPDGHF (138 aa)). A RanBP2-type zinc finger spans residues 580–608 (TSAMWACQHCTFMNQPGTGHCEMCSLPRT).

Belongs to the NPL4 family. In terms of assembly, heterodimer with UFD1. The heterodimer binds ubiquitinated proteins. The heterodimer binds to VCP and inhibits Golgi membrane fusion. Interacts with ZFAND2B; probably through VCP.

The protein localises to the cytoplasm. Its subcellular location is the cytosol. The protein resides in the endoplasmic reticulum. It is found in the nucleus. Its pathway is protein degradation; proteasomal ubiquitin-dependent pathway. The ternary complex containing UFD1, VCP and NPLOC4 binds ubiquitinated proteins and is necessary for the export of misfolded proteins from the ER to the cytoplasm, where they are degraded by the proteasome. The NPLOC4-UFD1-VCP complex regulates spindle disassembly at the end of mitosis and is necessary for the formation of a closed nuclear envelope. Acts as a negative regulator of type I interferon production via the complex formed with VCP and UFD1, which binds to RIGI and recruits RNF125 to promote ubiquitination and degradation of RIGI. In Rattus norvegicus (Rat), this protein is Nuclear protein localization protein 4 homolog (Nploc4).